A 481-amino-acid polypeptide reads, in one-letter code: Tripartite motif-containing protein 10 (481 aa).

The RING-type zinc-finger motif lies at 16–61 (CPICQGTLREPVTIDCGHNFCRACLTRYCEIPGPDLEESPTCPLCK). The B box-type zinc finger occupies 94–135 (GEEDVCQEHGEKIYFFCEDDEMQLCVVCREAGEHATHTMRFL). The Zn(2+) site is built by C99, H102, C121, and H127. Positions 142-177 (YREQIHKCLKRLRKEREETQEIQSRENKRMQVLLTQ) form a coiled coil. The 190-residue stretch at 292–481 (REMKMFLEKL…GRGSSFFLSS (190 aa)) folds into the B30.2/SPRY domain.

The protein belongs to the TRIM/RBCC family. As to quaternary structure, interacts with IFNAR1; this interaction prevents association of IFNAR1 with TYK2.

It localises to the cytoplasm. Functionally, E3 ligase that plays an essential role in the differentiation and survival of terminal erythroid cells. May directly bind to PTEN and promote its ubiquitination, resulting in its proteasomal degradation and activation of hypertrophic signaling. In addition, plays a role in immune response regulation by repressing the phosphorylation of STAT1 and STAT2 in the interferon/JAK/STAT signaling pathway independent of its E3 ligase activity. Mechanistically, interacts with the intracellular domain of IFNAR1 and thereby inhibits the association of TYK2 and IFNAR1. The polypeptide is Tripartite motif-containing protein 10 (TRIM10) (Pan troglodytes (Chimpanzee)).